Here is a 398-residue protein sequence, read N- to C-terminus: Mu-type opioid receptor (398 aa).

At 1 to 66 (MDSSAGPGNI…CPQTGSPSMV (66 aa)) the chain is on the extracellular side. Asn-9, Asn-31, Asn-38, and Asn-46 each carry an N-linked (GlcNAc...) asparagine glycan. A helical transmembrane segment spans residues 67–91 (TAITIMALYSIVCVVGLFGNFLVMY). The Cytoplasmic portion of the chain corresponds to 92-104 (VIVRYTKMKTATN). Residues 105 to 129 (IYIFNLALADALATSTLPFQSVNYL) traverse the membrane as a helical segment. Residues 130 to 140 (MGTWPFGNILC) are Extracellular-facing. A disulfide bond links Cys-140 and Cys-217. The chain crosses the membrane as a helical span at residues 141 to 163 (KIVISIDYYNMFTSIFTLCTMSV). The Cytoplasmic segment spans residues 164-183 (DRYIAVCHPVKALDFRTPRN). Residue Tyr-166 is modified to Phosphotyrosine. Residues 184 to 205 (AKIVNVCNWILSSAIGLPVMFM) traverse the membrane as a helical segment. Residues 206–228 (ATTKYRQGSIDCTLTFSHPTWYW) lie on the Extracellular side of the membrane. A helical membrane pass occupies residues 229 to 253 (ENLLKICVFIFAFIMPVLIITVCYG). Residues 254–277 (LMILRLKSVRMLSGSKEKDRNLRR) lie on the Cytoplasmic side of the membrane. The chain crosses the membrane as a helical span at residues 278 to 304 (ITRMVLVVVAVFIVCWTPIHIYVIIKA). Residues 305 to 312 (LITIPETT) are Extracellular-facing. Residues 313–336 (FQTVSWHFCIALGYTNSCLNPVLY) form a helical membrane-spanning segment. An NPxxY; plays a role in stabilizing the activated conformation of the receptor motif is present at residues 332-336 (NPVLY). The Cytoplasmic portion of the chain corresponds to 337–398 (AFLDENFKRC…NLEAETAPLP (62 aa)). Cys-351 is lipidated: S-palmitoyl cysteine. The segment at 362–383 (NSARIRQNTREHPSTANTVDRT) is disordered. Ser-363 is modified (phosphoserine). Thr-370 is subject to Phosphothreonine. Position 375 is a phosphoserine (Ser-375). Thr-394 carries the phosphothreonine modification.

Belongs to the G-protein coupled receptor 1 family. As to quaternary structure, forms homooligomers and heterooligomers with other GPCRs, such as OPRD1, OPRK1, OPRL1, NPFFR2, ADRA2A, SSTR2, CNR1 and CCR5 (probably in dimeric forms). Interacts with heterotrimeric G proteins; interaction with a heterotrimeric complex containing GNAI1, GNB1 and GNG2 stabilizes the active conformation of the receptor and increases its affinity for endomorphin-2, the synthetic opioid peptide DAMGO and for morphinan agonists. Interacts with PPL; the interaction disrupts agonist-mediated G-protein activation. Interacts (via C-terminus) with DNAJB4 (via C-terminus). Interacts with calmodulin; the interaction inhibits the constitutive activity of OPRM1; it abolishes basal and attenuates agonist-stimulated G-protein coupling. Interacts with FLNA, PLD2, RANBP9 and WLS and GPM6A. Interacts with RTP4. Interacts with SYP and GNAS. Interacts with RGS9, RGS17, RGS20, RGS4, PPP1R9B and HINT1. Isoform 9 interacts with GRPR. In terms of processing, phosphorylated. Differentially phosphorylated in basal and agonist-induced conditions. Agonist-mediated phosphorylation modulates receptor internalization. Phosphorylated by GRK2 in a agonist-dependent manner. Phosphorylation at Tyr-166 requires receptor activation, is dependent on non-receptor protein tyrosine kinase Src and results in a decrease in agonist efficacy by reducing G-protein coupling efficiency. Phosphorylated on tyrosine residues; the phosphorylation is involved in agonist-induced G-protein-independent receptor down-regulation. Phosphorylation at Ser-375 is involved in G-protein-dependent but not beta-arrestin-dependent activation of the ERK pathway. Ubiquitinated. A basal ubiquitination seems not to be related to degradation. Ubiquitination is increased upon formation of OPRM1:OPRD1 oligomers leading to proteasomal degradation; the ubiquitination is diminished by RTP4.

The protein resides in the cell membrane. It localises to the cell projection. Its subcellular location is the axon. It is found in the perikaryon. The protein localises to the dendrite. The protein resides in the endosome. In terms of biological role, receptor for endogenous opioids such as beta-endorphin and endomorphin. Receptor for natural and synthetic opioids including morphine, heroin, DAMGO, fentanyl, etorphine, buprenorphin and methadone. Also activated by enkephalin peptides, such as Met-enkephalin or Met-enkephalin-Arg-Phe, with higher affinity for Met-enkephalin-Arg-Phe. Agonist binding to the receptor induces coupling to an inactive GDP-bound heterotrimeric G-protein complex and subsequent exchange of GDP for GTP in the G-protein alpha subunit leading to dissociation of the G-protein complex with the free GTP-bound G-protein alpha and the G-protein beta-gamma dimer activating downstream cellular effectors. The agonist- and cell type-specific activity is predominantly coupled to pertussis toxin-sensitive G(i) and G(o) G alpha proteins, GNAI1, GNAI2, GNAI3 and GNAO1 isoforms Alpha-1 and Alpha-2, and to a lesser extent to pertussis toxin-insensitive G alpha proteins GNAZ and GNA15. They mediate an array of downstream cellular responses, including inhibition of adenylate cyclase activity and both N-type and L-type calcium channels, activation of inward rectifying potassium channels, mitogen-activated protein kinase (MAPK), phospholipase C (PLC), phosphoinositide/protein kinase (PKC), phosphoinositide 3-kinase (PI3K) and regulation of NF-kappa-B. Also couples to adenylate cyclase stimulatory G alpha proteins. The selective temporal coupling to G-proteins and subsequent signaling can be regulated by RGSZ proteins, such as RGS9, RGS17 and RGS4. Phosphorylation by members of the GPRK subfamily of Ser/Thr protein kinases and association with beta-arrestins is involved in short-term receptor desensitization. Beta-arrestins associate with the GPRK-phosphorylated receptor and uncouple it from the G-protein thus terminating signal transduction. The phosphorylated receptor is internalized through endocytosis via clathrin-coated pits which involves beta-arrestins. The activation of the ERK pathway occurs either in a G-protein-dependent or a beta-arrestin-dependent manner and is regulated by agonist-specific receptor phosphorylation. Acts as a class A G-protein coupled receptor (GPCR) which dissociates from beta-arrestin at or near the plasma membrane and undergoes rapid recycling. Receptor down-regulation pathways are varying with the agonist and occur dependent or independent of G-protein coupling. Endogenous ligands induce rapid desensitization, endocytosis and recycling. Heterooligomerization with other GPCRs can modulate agonist binding, signaling and trafficking properties. Functionally, isoform 9 is involved in morphine-induced scratching and seems to cross-activate GRPR in response to morphine. The polypeptide is Mu-type opioid receptor (Oprm1) (Mus musculus (Mouse)).